Consider the following 415-residue polypeptide: Proline-serine-threonine phosphatase-interacting protein 1 (415 aa).

The F-BAR domain maps to 5–264; the sequence is LQFRDAFWCR…TLEGCDVEGD (260 aa). 2 coiled-coil regions span residues 94–133 and 162–215; these read LALALREELRSLEEFRERQKEQRKKYEAIMDRVQKSKLSL and SANG…TCEA. Ser-318 carries the post-translational modification Phosphoserine. Tyr-344 is modified (phosphotyrosine; by ABL1). Positions 358-415 constitute an SH3 domain; it reads SSAQDYRALYDYTAQNSDELDISAGDILAVILEGEDGWWTVERNGQRGFVPGSYLEKL.

As to quaternary structure, homodimer. Homotrimer. Interacts (via coiled-coil domain) with CD2AP, PTPN12 and PTPN18. Interacts (via SH3 domain) with ABL1 and WAS. Interacts (via SH3 and coiled-coil domains) with MEFV (via B-box zinc finger); the interaction allows binding of MEFV to PYCARD and facilitates formation of PYCARD pyroptosomes. Interacts with DNM2 and FASLG. Interacts with CD2. Post-translationally, dephosphorylated on Tyr-344 by PTPN18, this event negatively regulates the association of PSTPIP1 with SH2 domain-containing proteins as tyrosine kinase. Phosphorylation of Tyr-344 is probably required for subsequent phosphorylation at other tyrosine residues. Phosphorylation is induced by activation of the EGFR and PDGFR in a ABL1 dependent manner. The phosphorylation regulates the interaction with WAS and with MEFV. Highly expressed in adult lung and spleen, and weakly expressed in testis, muscle, kidney, brain and heart. Highly expressed in spleen and thymus, moderately in lung, brain and muscle, and weakly expressed in heart and liver (at protein level).

The protein resides in the cytoplasm. It localises to the perinuclear region. Its subcellular location is the cell projection. The protein localises to the lamellipodium. It is found in the cleavage furrow. The protein resides in the cytoskeleton. It localises to the cell membrane. Its subcellular location is the uropodium. Its function is as follows. Involved in regulation of the actin cytoskeleton. May regulate WAS actin-bundling activity. Bridges the interaction between ABL1 and PTPN18 leading to ABL1 dephosphorylation. May play a role as a scaffold protein between PTPN12 and WAS and allow PTPN12 to dephosphorylate WAS. Has the potential to physically couple CD2 and CD2AP to WAS. Acts downstream of CD2 and CD2AP to recruit WAS to the T-cell:APC contact site so as to promote the actin polymerization required for synapse induction during T-cell activation. Down-regulates CD2-stimulated adhesion through the coupling of PTPN12 to CD2. Also has a role in innate immunity and the inflammatory response. Recruited to inflammasomes by MEFV. Induces formation of pyroptosomes, large supramolecular structures composed of oligomerized PYCARD dimers which form prior to inflammatory apoptosis. Binding to MEFV allows MEFV to bind to PYCARD and facilitates pyroptosome formation. Regulates endocytosis and cell migration in neutrophils. This is Proline-serine-threonine phosphatase-interacting protein 1 (Pstpip1) from Mus musculus (Mouse).